The primary structure comprises 348 residues: Fe-S cluster assembly protein DRE2 (348 aa).

The interval 1 to 162 is N-terminal SAM-like domain; it reads MSQYKTGLLL…KKASSSTSNL (162 aa). The disordered stretch occupies residues 137–170; sequence KTNNTKLQSGSKLPTFKKASSSTSNLPSFKKADH. A compositionally biased stretch (polar residues) spans 144–163; that stretch reads QSGSKLPTFKKASSSTSNLP. The tract at residues 163-242 is linker; sequence PSFKKADHSR…EEELIDEDGS (80 aa). Residue serine 206 is modified to Phosphoserine. [2Fe-2S] cluster is bound by residues cysteine 252, cysteine 263, cysteine 266, and cysteine 268. Positions 252–268 are fe-S binding site A; that stretch reads CGKSKTKKKKACKDCTC. Cysteine 311, cysteine 314, cysteine 322, and cysteine 325 together coordinate [4Fe-4S] cluster. Short sequence motifs (cx2C motif) lie at residues 311-314 and 322-325; these read CGSC and CSGC. Residues 311–325 are fe-S binding site B; it reads CGSCSLGDAFRCSGC.

This sequence belongs to the anamorsin family. In terms of assembly, monomer. Interacts with TAH18. Interacts with MIA40. [2Fe-2S] cluster is required as a cofactor. The cofactor is [4Fe-4S] cluster.

The protein resides in the cytoplasm. It localises to the mitochondrion intermembrane space. Functionally, component of the cytosolic iron-sulfur (Fe-S) protein assembly (CIA) machinery required for the maturation of extramitochondrial Fe-S proteins. Part of an electron transfer chain functioning in an early step of cytosolic Fe-S biogenesis, facilitating the de novo assembly of a [4Fe-4S] cluster on the scaffold complex CFD1-NBP35. Electrons are transferred to DRE2 from NADPH via the FAD- and FMN-containing protein TAH18. TAH18-DRE2 are also required for the assembly of the diferric tyrosyl radical cofactor of ribonucleotide reductase (RNR), probably by providing electrons for reduction during radical cofactor maturation in the catalytic small subunit RNR2. This Saccharomyces cerevisiae (strain Lalvin EC1118 / Prise de mousse) (Baker's yeast) protein is Fe-S cluster assembly protein DRE2.